An 816-amino-acid chain; its full sequence is Phosphatidylinositol 4-kinase beta (816 aa).

Disordered regions lie at residues 1–30, 99–120, and 248–318; these read MGDT…GSLL, EEED…RRRR, and AHRK…SFSS. Gly2 is subject to N-acetylglycine. The tract at residues 2-68 is interaction with ACBD3; it reads GDTVVEPAPL…VKLLHGGVAV (67 aa). Residues 52–242 form the PIK helical domain; the sequence is CQDVLEKVKL…GTKLRKLILS (191 aa). Residue Ser258 is modified to Phosphoserine. At Thr263 the chain carries Phosphothreonine. Phosphoserine occurs at positions 266, 275, 277, 284, and 294. 2 stretches are compositionally biased toward polar residues: residues 278–297 and 306–318; these read DATA…SNPK and SSST…SFSS. Ser428 carries the post-translational modification Phosphoserine. Thr438 carries the phosphothreonine modification. Position 511 is a phosphoserine (Ser511). Phosphothreonine occurs at positions 517 and 519. Residues 535 to 801 enclose the PI3K/PI4K catalytic domain; that stretch reads EPWQEKVRRI…MVDGSMRSIT (267 aa). A G-loop region spans residues 541 to 547; that stretch reads VRRIREG. A catalytic loop region spans residues 668 to 676; sequence QVKDRHNGN. An activation loop region spans residues 687–711; that stretch reads HIDFGFILSSSPRNLGFETSAFKLT.

The protein belongs to the PI3/PI4-kinase family. Type III PI4K subfamily. Interacts with ARF1 and ARF3 in the Golgi complex, but not with ARF4, ARF5 or ARF6. Interacts with NCS1/FREQ in a calcium-independent manner. Interacts with CALN1/CABP8 and CALN2/CABP7; in a calcium-dependent manner; this interaction competes with NCS1/FREQ binding. Interacts with ACBD3. Interacts with ARMH3, YWHAB, YWHAE, YWHAG, YWHAH, YWHAQ, YWHAZ and SFN. Interacts with GGA2 (via VHS domain); the interaction is important for PI4KB location at the Golgi apparatus membrane. Interacts with ATG9A. Requires Mg(2+) as cofactor. Mn(2+) is required as a cofactor.

Its subcellular location is the endomembrane system. The protein localises to the mitochondrion outer membrane. It localises to the rough endoplasmic reticulum membrane. It is found in the golgi apparatus. The protein resides in the golgi apparatus membrane. It catalyses the reaction a 1,2-diacyl-sn-glycero-3-phospho-(1D-myo-inositol) + ATP = a 1,2-diacyl-sn-glycero-3-phospho-(1D-myo-inositol 4-phosphate) + ADP + H(+). Its activity is regulated as follows. Inhibited by wortmannin. Increased kinase activity upon interaction with NCS1/FREQ. Phosphorylates phosphatidylinositol (PI) in the first committed step in the production of the second messenger inositol-1,4,5,-trisphosphate (PIP). May regulate Golgi disintegration/reorganization during mitosis, possibly via its phosphorylation. Involved in Golgi-to-plasma membrane trafficking. In Callithrix jacchus (White-tufted-ear marmoset), this protein is Phosphatidylinositol 4-kinase beta (PI4KB).